We begin with the raw amino-acid sequence, 260 residues long: Adenosylcobinamide-GDP ribazoletransferase (260 aa).

A run of 7 helical transmembrane segments spans residues 42–62 (PLAG…ANAI), 64–84 (LPPL…TGAL), 117–137 (FAAL…MAII), 144–164 (YALL…LAFW), 192–212 (GLGL…VALI), 214–234 (ALVL…AKIG), and 240–260 (TLGA…VMAL).

This sequence belongs to the CobS family. Requires Mg(2+) as cofactor.

It is found in the cell inner membrane. The catalysed reaction is alpha-ribazole + adenosylcob(III)inamide-GDP = adenosylcob(III)alamin + GMP + H(+). It carries out the reaction alpha-ribazole 5'-phosphate + adenosylcob(III)inamide-GDP = adenosylcob(III)alamin 5'-phosphate + GMP + H(+). The protein operates within cofactor biosynthesis; adenosylcobalamin biosynthesis; adenosylcobalamin from cob(II)yrinate a,c-diamide: step 7/7. Joins adenosylcobinamide-GDP and alpha-ribazole to generate adenosylcobalamin (Ado-cobalamin). Also synthesizes adenosylcobalamin 5'-phosphate from adenosylcobinamide-GDP and alpha-ribazole 5'-phosphate. This Brucella melitensis biotype 1 (strain ATCC 23456 / CCUG 17765 / NCTC 10094 / 16M) protein is Adenosylcobinamide-GDP ribazoletransferase.